We begin with the raw amino-acid sequence, 238 residues long: Small ribosomal subunit protein uS2 (238 aa).

Belongs to the universal ribosomal protein uS2 family.

The sequence is that of Small ribosomal subunit protein uS2 from Haemophilus ducreyi (strain 35000HP / ATCC 700724).